Here is a 138-residue protein sequence, read N- to C-terminus: Membrane glycoprotein UL139 (138 aa).

The signal sequence occupies residues 1-15 (MLWILVLFALAASAS). The tract at residues 17–37 (TTTGTSSNSSQSTSAGTTNTT) is disordered. Residues 64–84 (GWTLSGLLLIFTCCLCCFWLV) form a helical membrane-spanning segment. Over residues 113-129 (SDATLPMGTTGSYTPPQ) the composition is skewed to polar residues. A disordered region spans residues 113-138 (SDATLPMGTTGSYTPPQDGSFPPPPR).

The protein resides in the host membrane. In Homo sapiens (Human), this protein is Membrane glycoprotein UL139 (UL139).